We begin with the raw amino-acid sequence, 47 residues long: Protein RL9A (47 aa).

A helical transmembrane segment spans residues 27-47 (CMIIVIMIAISIWILTYVLFL).

It is found in the host membrane. The chain is Protein RL9A (RL9A) from Human cytomegalovirus (strain Merlin) (HHV-5).